Consider the following 412-residue polypeptide: Serine hydroxymethyltransferase (412 aa).

(6S)-5,6,7,8-tetrahydrofolate-binding positions include leucine 117 and 121 to 123; that span reads GHL. Residue lysine 226 is modified to N6-(pyridoxal phosphate)lysine.

Belongs to the SHMT family. Homodimer. Requires pyridoxal 5'-phosphate as cofactor.

It is found in the cytoplasm. It catalyses the reaction (6R)-5,10-methylene-5,6,7,8-tetrahydrofolate + glycine + H2O = (6S)-5,6,7,8-tetrahydrofolate + L-serine. Its pathway is one-carbon metabolism; tetrahydrofolate interconversion. The protein operates within amino-acid biosynthesis; glycine biosynthesis; glycine from L-serine: step 1/1. In terms of biological role, catalyzes the reversible interconversion of serine and glycine with tetrahydrofolate (THF) serving as the one-carbon carrier. This reaction serves as the major source of one-carbon groups required for the biosynthesis of purines, thymidylate, methionine, and other important biomolecules. Also exhibits THF-independent aldolase activity toward beta-hydroxyamino acids, producing glycine and aldehydes, via a retro-aldol mechanism. The polypeptide is Serine hydroxymethyltransferase (Staphylococcus aureus (strain bovine RF122 / ET3-1)).